Reading from the N-terminus, the 154-residue chain is UPF0178 protein Sala_2376 (154 aa).

The protein belongs to the UPF0178 family.

The polypeptide is UPF0178 protein Sala_2376 (Sphingopyxis alaskensis (strain DSM 13593 / LMG 18877 / RB2256) (Sphingomonas alaskensis)).